We begin with the raw amino-acid sequence, 335 residues long: Interleukin-12 subunit beta (335 aa).

Residues 1-22 (MCPQKLTISWFAIVLLVSPLMA) form the signal peptide. The Ig-like C2-type domain occupies 23–106 (MWELEKDVYV…LSHSHLLLHK (84 aa)). N-linked (GlcNAc...) asparagine glycosylation occurs at Asn-47. A disulfide bridge connects residues Cys-50 and Cys-90. 3 N-linked (GlcNAc...) asparagine glycosylation sites follow: Asn-122, Asn-132, and Asn-220. The 92-residue stretch at 233–324 (PDPPKNLQMK…QDRYYNSSCS (92 aa)) folds into the Fibronectin type-III domain.

Belongs to the IL-12B family. In terms of assembly, heterodimer with IL12A; disulfide-linked. The heterodimer is known as interleukin IL-12. Heterodimer with IL23A; disulfide-linked. The heterodimer is known as interleukin IL-23. Also secreted as a monomer. Interacts with NBR1; this interaction promotes IL-12 secretion.

Its subcellular location is the secreted. In terms of biological role, cytokine that can act as a growth factor for activated T and NK cells, enhance the lytic activity of NK/lymphokine-activated killer cells, and stimulate the production of IFN-gamma by resting PBMC. Associates with IL23A to form the IL-23 interleukin, a heterodimeric cytokine which functions in innate and adaptive immunity. IL-23 may constitute with IL-17 an acute response to infection in peripheral tissues. IL-23 binds to a heterodimeric receptor complex composed of IL12RB1 and IL23R, activates the Jak-Stat signaling cascade, stimulates memory rather than naive T-cells and promotes production of pro-inflammatory cytokines. IL-23 induces autoimmune inflammation and thus may be responsible for autoimmune inflammatory diseases and may be important for tumorigenesis. This Mus musculus (Mouse) protein is Interleukin-12 subunit beta (Il12b).